A 485-amino-acid chain; its full sequence is Glutamyl-tRNA(Gln) amidotransferase subunit A (485 aa).

Residues Lys-78 and Ser-153 each act as charge relay system in the active site. Ser-177 serves as the catalytic Acyl-ester intermediate.

The protein belongs to the amidase family. GatA subfamily. Heterotrimer of A, B and C subunits.

The catalysed reaction is L-glutamyl-tRNA(Gln) + L-glutamine + ATP + H2O = L-glutaminyl-tRNA(Gln) + L-glutamate + ADP + phosphate + H(+). Its function is as follows. Allows the formation of correctly charged Gln-tRNA(Gln) through the transamidation of misacylated Glu-tRNA(Gln) in organisms which lack glutaminyl-tRNA synthetase. The reaction takes place in the presence of glutamine and ATP through an activated gamma-phospho-Glu-tRNA(Gln). The chain is Glutamyl-tRNA(Gln) amidotransferase subunit A from Bacillus cytotoxicus (strain DSM 22905 / CIP 110041 / 391-98 / NVH 391-98).